A 235-amino-acid chain; its full sequence is Phosphoribosylaminoimidazole-succinocarboxamide synthase (235 aa).

It belongs to the SAICAR synthetase family.

It carries out the reaction 5-amino-1-(5-phospho-D-ribosyl)imidazole-4-carboxylate + L-aspartate + ATP = (2S)-2-[5-amino-1-(5-phospho-beta-D-ribosyl)imidazole-4-carboxamido]succinate + ADP + phosphate + 2 H(+). The protein operates within purine metabolism; IMP biosynthesis via de novo pathway; 5-amino-1-(5-phospho-D-ribosyl)imidazole-4-carboxamide from 5-amino-1-(5-phospho-D-ribosyl)imidazole-4-carboxylate: step 1/2. This is Phosphoribosylaminoimidazole-succinocarboxamide synthase from Streptococcus agalactiae serotype Ia (strain ATCC 27591 / A909 / CDC SS700).